The following is a 354-amino-acid chain: Guanine nucleotide-binding protein G(i) subunit alpha-1 (354 aa).

A lipid anchor (N-myristoyl glycine) is attached at Gly-2. Residue Cys-3 is the site of S-palmitoyl cysteine attachment. The G-alpha domain occupies 32-354 (REVKLLLLGA…KNNLKDCGLF (323 aa)). The interval 35 to 48 (KLLLLGAGESGKST) is G1 motif. GTP is bound by residues 43-48 (ESGKST), 150-151 (DS), and 175-178 (LRTR). Ser-47 is a binding site for Mg(2+). The G2 motif stretch occupies residues 173 to 181 (DVLRTRVKT). Thr-181 contacts Mg(2+). The segment at 196–205 (FKMFDVGGQR) is G3 motif. Residues 200–204 (DVGGQ), 269–272 (NKKD), and Ala-326 contribute to the GTP site. The tract at residues 265–272 (ILFLNKKD) is G4 motif. Positions 324–329 (TCATDT) are G5 motif.

Belongs to the G-alpha family. G(i/o/t/z) subfamily. Heterotrimeric G proteins are composed of 3 units; alpha, beta and gamma. The alpha chain contains the guanine nucleotide binding site. Part of a spindle orientation complex at least composed of GNAI1, GPSM2 and NUMA1. Identified in complex with the beta subunit GNB1 and the gamma subunit GNG1. Identified in complex with the beta subunit GNB1 and the gamma subunit GNG2. Component of the TAS2R14-GNAI1 complex, consisting of TAS2R14, GNAI1, GNB1 and GNG2; within the complex interacts with TAS2R14; this complex plays a role in the perception of bitterness. GTP binding causes dissociation of the heterotrimer, liberating the individual subunits so that they can interact with downstream effector proteins. Interacts (GDP-bound form) with GPSM1; this inhibits guanine nucleotide exchange and GTP binding. Interacts (GDP-bound form) with GPSM2 (via GoLoco domains); this inhibits guanine nucleotide exchange. Interacts with RGS10; this strongly enhances GTP hydrolysis. Interacts with RGS1 and RGS16; this strongly enhances GTPase activity. Interacts with RGS4. Interacts with RGS12. Interacts (via active GTP- or inactive GDP-bound forms) with RGS14 (via RGS and GoLoco domains). Interacts with RGS3, RGS6, RGS7, RGS8, RGS17, RGS18 and RGS20 (in vitro). Interacts (GDP-bound form) with RIC8A (via C-terminus); promoting GNAI1 folding and association with the plasma membrane. Interacts (inactive GDP-bound form) with NUCB1 (via GBA motif); the interaction leads to activation of GNAI1. Interacts (inactive GDP-bound form) with CCDC88C/DAPLE (via GBA motif); the interaction leads to activation of GNAI1. Interacts (inactive GDP-bound form) with CCDC8A/GIV (via GBA motif). Interacts with GPR15. Post-translationally, myristoylation at Gly-2 is required for membrane anchoring before palmitoylation. Palmitoylation at Cys-3 varies with membrane lipid composition.

Its subcellular location is the nucleus. It localises to the cytoplasm. It is found in the cell membrane. The protein resides in the cytoskeleton. The protein localises to the microtubule organizing center. Its subcellular location is the centrosome. It localises to the cell cortex. It is found in the membrane. In terms of biological role, guanine nucleotide-binding proteins (G proteins) function as transducers downstream of G protein-coupled receptors (GPCRs) in numerous signaling cascades. The alpha chain contains the guanine nucleotide binding site and alternates between an active, GTP-bound state and an inactive, GDP-bound state. Signaling by an activated GPCR promotes GDP release and GTP binding. The alpha subunit has a low GTPase activity that converts bound GTP to GDP, thereby terminating the signal. Both GDP release and GTP hydrolysis are modulated by numerous regulatory proteins. Signaling is mediated via effector proteins, such as adenylate cyclase. Inhibits adenylate cyclase activity of ADCY1, ADCY5 and ADCY6, leading to decreased intracellular cAMP levels. The inactive GDP-bound form prevents the association of RGS14 with centrosomes and is required for the translocation of RGS14 from the cytoplasm to the plasma membrane. Required for normal cytokinesis during mitosis. Required for cortical dynein-dynactin complex recruitment during metaphase. This chain is Guanine nucleotide-binding protein G(i) subunit alpha-1 (GNAI1), found in Pongo abelii (Sumatran orangutan).